We begin with the raw amino-acid sequence, 235 residues long: MOB kinase activator 2 (235 aa).

The disordered stretch occupies residues 1–22; the sequence is MDWLMGKSKAKPNGKKPAAEEK. Zn(2+)-binding residues include cysteine 78, cysteine 83, histidine 157, and histidine 162. The disordered stretch occupies residues 213–235; the sequence is NSGATGDGANSGASGAQNHVKER.

This sequence belongs to the MOB1/phocein family. Binds STK38 and STK38L. In terms of processing, phosphorylated.

It localises to the nucleus. The protein resides in the cytoplasm. Its subcellular location is the perinuclear region. Stimulates the autophosphorylation and kinase activity of STK38 and STK38L. The polypeptide is MOB kinase activator 2 (Mob2) (Mus musculus (Mouse)).